A 1240-amino-acid chain; its full sequence is ABC transporter B family member 15 (1240 aa).

6 consecutive transmembrane segments (helical) span residues 35–55, 82–102, 158–180, 184–206, 264–284, and 296–316; these read MGLGLIGAVGDGFTTPLVLLI, VALLYVACGSWVVCFLEGYCW, LPNFLMSASTFVGSYIVGFILLW, IVGLPFIVLLVIPGLMYGRALIS, GITIGSNGITFAMWGFMSWYG, and GTVFAVAAAIAIGGVSLGGGL. The ABC transmembrane type-1 1 domain occupies 35–324; that stretch reads MGLGLIGAVG…GLSNLKYFFE (290 aa). Positions 359–595 constitute an ABC transporter 1 domain; the sequence is VEFKNVKFVY…IDGQYSTLVH (237 aa). Position 394–401 (394–401) interacts with ATP; the sequence is GGSGSGKS. Residues Asn-542, Asn-605, and Asn-622 are each glycosylated (N-linked (GlcNAc...) asparagine). The tract at residues 617-646 is disordered; sequence SKDIRNSSRVSTLSRSSSANSVTGPSTIKN. Positions 623–639 are enriched in low complexity; sequence SSRVSTLSRSSSANSVT. Asn-646 carries N-linked (GlcNAc...) asparagine glycosylation. Residues 672 to 960 form the ABC transmembrane type-1 2 domain; the sequence is ALYGCISATL…AGSMTTDLAK (289 aa). The next 2 helical transmembrane spans lie at 681-701 and 714-734; these read LFGAIQPAYAYSLGSMVSVYF and IYALSFVGLAVLSFLINISQH. Asn-769 carries N-linked (GlcNAc...) asparagine glycosylation. 4 helical membrane passes run 794-813, 817-839, 895-915, and 923-943; these read ALVVQTVSAVTIAFTMGLVI, LALVMIAVQPVIIVCFYTRRVLL, SWFAGFGLAMSQSLTSCTWAL, and LIQDGYITAKALFETFMILVS. An ABC transporter 2 domain is found at 995 to 1233; sequence VEFLDVDFSY…GPTGIYFSLV (239 aa). Asn-1015 carries an N-linked (GlcNAc...) asparagine glycan. 1030–1037 is an ATP binding site; it reads GPSGSGKS.

Belongs to the ABC transporter superfamily. ABCB family. Multidrug resistance exporter (TC 3.A.1.201) subfamily.

It localises to the membrane. The chain is ABC transporter B family member 15 (ABCB15) from Arabidopsis thaliana (Mouse-ear cress).